The sequence spans 73 residues: U3-agatoxin-Ao1k (73 aa).

Residues 1–20 (MRTIISLLLLSAMVFAVIEA) form the signal peptide. Residues 21-34 (ISLEEGLQLFEGER) constitute a propeptide that is removed on maturation. Intrachain disulfides connect Cys-36/Cys-52, Cys-43/Cys-57, Cys-51/Cys-67, and Cys-59/Cys-65. Residue Ser-71 is modified to Serine amide.

It belongs to the neurotoxin 07 (Beta/delta-agtx) family. 03 (aga-4) subfamily. Aga sub-subfamily. In terms of tissue distribution, expressed by the venom gland.

Its subcellular location is the secreted. Its function is as follows. Insecticidal neurotoxin that modulates the insect Nav channel (DmNaV1/tipE (para/tipE)) in a unique manner, with both the activation and inactivation processes being affected. The voltage dependence of activation is shifted toward more hyperpolarized potentials (analogous to site 4 toxins) and a non-inactivating persistent sodium current is induced (site 3-like action). Interestingly, both effects take place in a voltage-dependent manner, producing a bell-shaped curve between -80 and 0 mV. Compared to beta/delta-agatoxin-1 to -3, this toxin appears to affect the insect sodium channel only weakly. This Agelena orientalis (Funnel-web spider) protein is U3-agatoxin-Ao1k.